A 211-amino-acid chain; its full sequence is Small ribosomal subunit protein uS4 (211 aa).

Residues 99–160 (RRLDSVVYQM…KSRNIQQVRE (62 aa)) enclose the S4 RNA-binding domain.

This sequence belongs to the universal ribosomal protein uS4 family. As to quaternary structure, part of the 30S ribosomal subunit. Contacts protein S5. The interaction surface between S4 and S5 is involved in control of translational fidelity.

Its function is as follows. One of the primary rRNA binding proteins, it binds directly to 16S rRNA where it nucleates assembly of the body of the 30S subunit. Functionally, with S5 and S12 plays an important role in translational accuracy. The protein is Small ribosomal subunit protein uS4 of Petrotoga mobilis (strain DSM 10674 / SJ95).